Consider the following 545-residue polypeptide: MTHFIFVTGGVVSSLGKGISAASVAALLEARGLKVTMVKMDPYINVDPGTMSPFQHGEVFVTEDGAETDLDLGYYERFLRRAKMTKLNNFTSGRVYQDVLNKERRGDYLGGTVQVIPHITDNIKERVLAAGEGYDVAIVEIGGTVGDIESLPFMESVRQLMVELGHKRTMLMHLTLLPYIRSAAELKTKPTQHSVKELLSIGIQPDILICRTEHDVDADTKRKIALFTNVEARAVVVCKDAKTIYQIPRNFYEQKVDDLICERFGYNDLPQADLSDWDQVCEALFNPEYIVRVAMVGKYVELPDAYKSVNEALLHAGIQNRVKVQIDYVDAETLETQDISILSTADAILVPGGFGERGTEGKMLAIKYAREQGIPFLGICLGMQLAVIEYARNVAGLAEATSTEFNRSTKFPIIGLITEWLDERGELQQRSVESDLGGTMRLGAQKSELVEGTKTRQVYGKAEIVERHRHRYEMNDRFIEPIEKAGMKISGYSTAQHLVETVEIPEHPWFIAVQFHPEFTSSPRDGHPLFASFIDAAKKQHLKTK.

Residues 1–266 (MTHFIFVTGG…DDLICERFGY (266 aa)) are amidoligase domain. Ser13 is a binding site for CTP. UTP is bound at residue Ser13. ATP contacts are provided by residues 14 to 19 (SLGKGI) and Asp71. Mg(2+)-binding residues include Asp71 and Glu140. CTP-binding positions include 147 to 149 (DIE), 187 to 192 (KTKPTQ), and Lys223. Residues 187–192 (KTKPTQ) and Lys223 each bind UTP. 239-241 (KDA) serves as a coordination point for ATP. The region spanning 292–543 (RVAMVGKYVE…IDAAKKQHLK (252 aa)) is the Glutamine amidotransferase type-1 domain. Gly353 lines the L-glutamine pocket. Catalysis depends on Cys380, which acts as the Nucleophile; for glutamine hydrolysis. L-glutamine-binding positions include 381–384 (LGMQ), Glu404, and Arg471. Active-site residues include His516 and Glu518.

It belongs to the CTP synthase family. Homotetramer.

The catalysed reaction is UTP + L-glutamine + ATP + H2O = CTP + L-glutamate + ADP + phosphate + 2 H(+). It catalyses the reaction L-glutamine + H2O = L-glutamate + NH4(+). It carries out the reaction UTP + NH4(+) + ATP = CTP + ADP + phosphate + 2 H(+). The protein operates within pyrimidine metabolism; CTP biosynthesis via de novo pathway; CTP from UDP: step 2/2. Allosterically activated by GTP, when glutamine is the substrate; GTP has no effect on the reaction when ammonia is the substrate. The allosteric effector GTP functions by stabilizing the protein conformation that binds the tetrahedral intermediate(s) formed during glutamine hydrolysis. Inhibited by the product CTP, via allosteric rather than competitive inhibition. Catalyzes the ATP-dependent amination of UTP to CTP with either L-glutamine or ammonia as the source of nitrogen. Regulates intracellular CTP levels through interactions with the four ribonucleotide triphosphates. This is CTP synthase from Acinetobacter baylyi (strain ATCC 33305 / BD413 / ADP1).